Reading from the N-terminus, the 48-residue chain is Cytochrome b559 subunit beta (48 aa).

Residues 23–39 (WLAVHALAIPSVFFLGA) traverse the membrane as a helical segment. Histidine 27 contributes to the heme binding site.

The protein belongs to the PsbE/PsbF family. Heterodimer of an alpha subunit and a beta subunit. PSII is composed of 1 copy each of membrane proteins PsbA, PsbB, PsbC, PsbD, PsbE, PsbF, PsbH, PsbI, PsbJ, PsbK, PsbL, PsbM, PsbT, PsbX, PsbY, Psb30/Ycf12, peripheral proteins PsbO, CyanoQ (PsbQ), PsbU, PsbV and a large number of cofactors. It forms dimeric complexes. Heme b serves as cofactor.

It is found in the cellular thylakoid membrane. This b-type cytochrome is tightly associated with the reaction center of photosystem II (PSII). PSII is a light-driven water:plastoquinone oxidoreductase that uses light energy to abstract electrons from H(2)O, generating O(2) and a proton gradient subsequently used for ATP formation. It consists of a core antenna complex that captures photons, and an electron transfer chain that converts photonic excitation into a charge separation. In Prochlorococcus marinus (strain MIT 9515), this protein is Cytochrome b559 subunit beta.